The sequence spans 326 residues: Acetyl-coenzyme A carboxylase carboxyl transferase subunit alpha (326 aa).

The CoA carboxyltransferase C-terminal domain occupies 44-298 (KLETRAMQLR…KQALLDNLDE (255 aa)).

It belongs to the AccA family. As to quaternary structure, acetyl-CoA carboxylase is a heterohexamer composed of biotin carboxyl carrier protein (AccB), biotin carboxylase (AccC) and two subunits each of ACCase subunit alpha (AccA) and ACCase subunit beta (AccD).

Its subcellular location is the cytoplasm. It carries out the reaction N(6)-carboxybiotinyl-L-lysyl-[protein] + acetyl-CoA = N(6)-biotinyl-L-lysyl-[protein] + malonyl-CoA. It functions in the pathway lipid metabolism; malonyl-CoA biosynthesis; malonyl-CoA from acetyl-CoA: step 1/1. In terms of biological role, component of the acetyl coenzyme A carboxylase (ACC) complex. First, biotin carboxylase catalyzes the carboxylation of biotin on its carrier protein (BCCP) and then the CO(2) group is transferred by the carboxyltransferase to acetyl-CoA to form malonyl-CoA. This chain is Acetyl-coenzyme A carboxylase carboxyl transferase subunit alpha, found in Trichormus variabilis (strain ATCC 29413 / PCC 7937) (Anabaena variabilis).